We begin with the raw amino-acid sequence, 96 residues long: Large ribosomal subunit protein uL23 (96 aa).

Belongs to the universal ribosomal protein uL23 family. As to quaternary structure, part of the 50S ribosomal subunit. Contacts protein L29, and trigger factor when it is bound to the ribosome.

One of the early assembly proteins it binds 23S rRNA. One of the proteins that surrounds the polypeptide exit tunnel on the outside of the ribosome. Forms the main docking site for trigger factor binding to the ribosome. This is Large ribosomal subunit protein uL23 from Caldanaerobacter subterraneus subsp. tengcongensis (strain DSM 15242 / JCM 11007 / NBRC 100824 / MB4) (Thermoanaerobacter tengcongensis).